The chain runs to 340 residues: Latency-related protein 1 (340 aa).

2 disordered regions span residues 13–96 (AALW…PNRQ) and 254–340 (RLPG…PPRP). A run of 2 repeats spans residues 27–43 (PTPT…PRTP) and 59–75 (PTPT…PRTP). Residues 27–75 (PTPTHPHSHAPPLPRTPTPSHPHSRAPPLPRAPTPTHPHSHAPPLPRTP) are 2 X 17 AA repeats. Residues 35-73 (HAPPLPRTPTPSHPHSRAPPLPRAPTPTHPHSHAPPLPR) are compositionally biased toward pro residues. Positions 287–307 (ARGGGSGGGRGPGGGRGGPRG) are enriched in gly residues. A compositionally biased stretch (basic residues) spans 308–326 (SRGRGGRGRGGRGGGRRGR).

The chain is Latency-related protein 1 from Human herpesvirus 1 (strain F) (HHV-1).